The sequence spans 701 residues: MEIPLSRYQSIRLDEIRDSSSNPKVLTFPRKFSLRGRRWKNPFGRLSCSSVVQGLKPKPKLKPEPIRIEVKESKDQILDDTQISKSGVTICSQIEKLVLCNRFREAFELFEILEIRCSFKVGVSTYDALVEACIRLKSIRCVKRVYGFMMSNGFEPEQYMMNRILLMHVKCGMIIDARRLFDEIPERNLYSYYSIISGFVNFGNYVEAFELFKMMWEELSDCETHTFAVMLRASAGLGSIYVGKQLHVCALKLGVVDNTFVSCGLIDMYSKCGDIEDARCAFECMPEKTTVAWNNVIAGYALHGYSEEALCLLYDMRDSGVSIDQFTLSIMIRISTKLAKLELTKQAHASLIRNGFESEIVANTALVDFYSKWGRVDTARYVFDKLPRKNIISWNALMGGYANHGRGTDAVKLFEKMIAANVAPNHVTFLAVLSACAYSGLSEQGWEIFLSMSEVHGIKPRAMHYACMIELLGRDGLLDEAIAFIRRAPLKTTVNMWAALLNACRMQENLELGRVVAEKLYGMGPEKLGNYVVMYNMYNSMGKTAEAAGVLETLESKGLSMMPACTWVEVGDQTHSFLSGDRFDSYNETVKRQIYQKVDELMEEISEYGYSEEEQHLLPDVDEKEEERVGRYHSEKLAIAYGLVNTPEWNPLQITQNHRICKNCHKVVEFISLVTGREMVVRDASRFHHFKEGKCSCGGYW.

A chloroplast-targeting transit peptide spans 1–47 (MEIPLSRYQSIRLDEIRDSSSNPKVLTFPRKFSLRGRRWKNPFGRLS). PPR repeat units follow at residues 86-116 (SGVT…LEIR), 122-156 (GVST…GFEP), 157-187 (EQYM…IPER), 188-218 (NLYS…MWEE), 223-257 (ETHT…GVVD), 258-288 (NTFV…MPEK), 289-323 (TTVA…GVSI), 324-358 (DQFT…GFES), 359-389 (EIVA…LPRK), 390-424 (NIIS…NVAP), 425-460 (NHVT…GIKP), and 461-491 (RAMH…APLK). The type E motif stretch occupies residues 496–571 (MWAALLNACR…MPACTWVEVG (76 aa)). The type E(+) motif; degenerate stretch occupies residues 572–606 (DQTHSFLSGDRFDSYNETVKRQIYQKVDELMEEIS). A type DYW motif region spans residues 607-701 (EYGYSEEEQH…EGKCSCGGYW (95 aa)).

This sequence belongs to the PPR family. PCMP-H subfamily.

Its subcellular location is the plastid. It is found in the chloroplast. This is Pentatricopeptide repeat-containing protein At5g50390, chloroplastic (PCMP-H58) from Arabidopsis thaliana (Mouse-ear cress).